Reading from the N-terminus, the 474-residue chain is ATP synthase subunit beta 2 (474 aa).

156 to 163 provides a ligand contact to ATP; that stretch reads GGAGVGKT.

It belongs to the ATPase alpha/beta chains family. In terms of assembly, F-type ATPases have 2 components, CF(1) - the catalytic core - and CF(0) - the membrane proton channel. CF(1) has five subunits: alpha(3), beta(3), gamma(1), delta(1), epsilon(1). CF(0) has three main subunits: a(1), b(2) and c(9-12). The alpha and beta chains form an alternating ring which encloses part of the gamma chain. CF(1) is attached to CF(0) by a central stalk formed by the gamma and epsilon chains, while a peripheral stalk is formed by the delta and b chains.

The protein resides in the cell inner membrane. It carries out the reaction ATP + H2O + 4 H(+)(in) = ADP + phosphate + 5 H(+)(out). Produces ATP from ADP in the presence of a proton gradient across the membrane. The catalytic sites are hosted primarily by the beta subunits. This Shewanella frigidimarina (strain NCIMB 400) protein is ATP synthase subunit beta 2.